Reading from the N-terminus, the 576-residue chain is MGFRINTNIGALNAHANSVVNSNELDKSLSRLSSGLRINSAADDASGMAIADSLRSQAATLGQAINNGNDAIGILQTADKAMDEQLKILDTIKTKATQAAQDGQSLKTRTMLQADINRLMEELDNIANTTSFNGKQLLSGNFTNQEFQIGASSNQTIKATIGATQSSKIGVTRFETGAQSFTSGVVGLTIKNYNGIEDFKFDNVVISTSVGTGLGALAEEINKSADKTGVRATYDVKTTGVYAIKEGTTSQDFAINGVVIGQINYKDGDNNGQLVSAINAVKDTTGVQASKDENGKLVLTSADGRGIKITGDIGVGSGILANQKENYGRLSLVKNDGRDINISGTNLSAIGMGTTDMISQSSVSLRESKGQISATNADAMGFNSYKGGGKFVFTQNVSSISAFMSAQGSGFSRGSGFSVGSGKNLSVGLSQGIQIISSAASMSNTYVVSAGSGFSSGSGNSQFAALKTTAANTTDETAGVTTLKGAMAVMDIAETAITNLDQIRADIGSVQNQLQVTINNITVTQVNVKAAESTIRDVDFASESANFSKYNILAQSGSYAMSQANAVQQNVLKLLQ.

Belongs to the bacterial flagellin family. In terms of assembly, heteromer of FlaA and FlaB. Interacts with FliW. Interacts with FliS.

It is found in the secreted. It localises to the bacterial flagellum. Flagellin is the subunit protein which polymerizes to form the filaments of bacterial flagella. The protein is Flagellin B (flaB) of Campylobacter jejuni subsp. jejuni serotype O:6 (strain 81116 / NCTC 11828).